The chain runs to 311 residues: Elongation factor Ts (311 aa).

The tract at residues threonine 81 to valine 84 is involved in Mg(2+) ion dislocation from EF-Tu.

It belongs to the EF-Ts family.

It is found in the cytoplasm. Associates with the EF-Tu.GDP complex and induces the exchange of GDP to GTP. It remains bound to the aminoacyl-tRNA.EF-Tu.GTP complex up to the GTP hydrolysis stage on the ribosome. In Trichlorobacter lovleyi (strain ATCC BAA-1151 / DSM 17278 / SZ) (Geobacter lovleyi), this protein is Elongation factor Ts.